A 181-amino-acid polypeptide reads, in one-letter code: MAAKVSSDPLVIGRVIGDVVDHFTSTVKMSVIYNSNNSIKHVYNGHELFPSAVTSTPRVEVHGGDMRSFFTLIMTDPDVPGPSDPYLREHLHWIVTDIPGTTDSSFGKEVVSYEMPRPNIGIHRFVFLLFKQKKRGQAMLSPPVVCRDGFNTRKFTQENELGLPVAAVFFNCQRETAARRR.

It belongs to the phosphatidylethanolamine-binding protein family. In terms of assembly, may form homodimers in solution.

Its subcellular location is the cytoplasm. In terms of biological role, expression of CEN leads to a morphological switch between shoot growth and the development of flower structures (inflorescence). May form complexes with phosphorylated ligands by interfering with kinases and their effectors. The chain is Protein CENTRORADIALIS (CEN) from Antirrhinum majus (Garden snapdragon).